The sequence spans 87 residues: Small ribosomal subunit protein uS17 (87 aa).

Belongs to the universal ribosomal protein uS17 family. Part of the 30S ribosomal subunit.

Functionally, one of the primary rRNA binding proteins, it binds specifically to the 5'-end of 16S ribosomal RNA. The protein is Small ribosomal subunit protein uS17 of Neisseria gonorrhoeae (strain ATCC 700825 / FA 1090).